The primary structure comprises 224 residues: Peptidyl-prolyl cis-trans isomerase CYP21-1 (224 aa).

A signal peptide spans 1–27 (MRREISFLLQPRCLLLLVALTIFLVFA). The region spanning 50 to 214 (FLDVDIDGQR…KKVVIADSGE (165 aa)) is the PPIase cyclophilin-type domain. A glycan (N-linked (GlcNAc...) asparagine) is linked at Asn-158.

Belongs to the cyclophilin-type PPIase family. Ubiquitous.

The protein localises to the endoplasmic reticulum. The enzyme catalyses [protein]-peptidylproline (omega=180) = [protein]-peptidylproline (omega=0). Its function is as follows. PPIases accelerate the folding of proteins. It catalyzes the cis-trans isomerization of proline imidic peptide bonds in oligopeptides. The sequence is that of Peptidyl-prolyl cis-trans isomerase CYP21-1 (CYP21-1) from Arabidopsis thaliana (Mouse-ear cress).